The chain runs to 461 residues: Probable outer membrane lipoprotein SilC (461 aa).

The signal sequence occupies residues 1 to 17; the sequence is MFKLKLLSISTIFILAG. A lipid anchor (N-palmitoyl cysteine) is attached at cysteine 18. The S-diacylglycerol cysteine moiety is linked to residue cysteine 18.

This sequence belongs to the outer membrane factor (OMF) (TC 1.B.17) family.

The protein resides in the cell outer membrane. Its function is as follows. Component of the sil cation-efflux system that confers resistance to silver. May be part of a three-component cation/proton antiporter. The protein is Probable outer membrane lipoprotein SilC (silC) of Salmonella typhimurium.